The primary structure comprises 917 residues: Alanine--tRNA ligase (917 aa).

The Zn(2+) site is built by His-615, His-619, Cys-719, and His-723.

The protein belongs to the class-II aminoacyl-tRNA synthetase family. The cofactor is Zn(2+).

It is found in the cytoplasm. It carries out the reaction tRNA(Ala) + L-alanine + ATP = L-alanyl-tRNA(Ala) + AMP + diphosphate. In terms of biological role, catalyzes the attachment of alanine to tRNA(Ala) in a two-step reaction: alanine is first activated by ATP to form Ala-AMP and then transferred to the acceptor end of tRNA(Ala). Also edits incorrectly charged Ser-tRNA(Ala) and Gly-tRNA(Ala) via its editing domain. This chain is Alanine--tRNA ligase, found in Thermococcus kodakarensis (strain ATCC BAA-918 / JCM 12380 / KOD1) (Pyrococcus kodakaraensis (strain KOD1)).